Consider the following 109-residue polypeptide: uncharacterized protein (109 aa).

To A.fulgidus AF1885.

This is an uncharacterized protein from Methanocaldococcus jannaschii (strain ATCC 43067 / DSM 2661 / JAL-1 / JCM 10045 / NBRC 100440) (Methanococcus jannaschii).